Reading from the N-terminus, the 253-residue chain is Probable transcriptional regulatory protein Hore_12350 (253 aa).

A disordered region spans residues 1–21; it reads MAGHSKWANIKHKKAKEDRKR.

The protein belongs to the TACO1 family.

The protein resides in the cytoplasm. The sequence is that of Probable transcriptional regulatory protein Hore_12350 from Halothermothrix orenii (strain H 168 / OCM 544 / DSM 9562).